The chain runs to 361 residues: MTAPVTAPTTMPAQTPPTVETDVVTEAPRPLDDDILARARRQVLDEGRGLDEQDVLAVLQLPDEALGDLLALAHEVRLRWCGPEVEVEGIISLKTGGCPEDCHFCSQSGRFDSPVRSAWLDVPSLVEAAKATAATGATEFCIVAAVRGPDQRLMAQIREGVAAIREAVDINVACSLGMLTQEQVDELAGLGVHRYNHNLETARSHFPKVVTTHSWEERWETCELVRAAGMELCCGAIIGVGESLEQRAELAAQLAALEPDEVPLNFLNPRPGTPFGDLPAVDSREALRTIAAFRLALPRTILRYAGGREITLGDLDVQGMLGGINAVIVGNYLTTLGKNPESDLAMLTELRMPIKSLQATL.

Positions Pro-83–Arg-308 constitute a Radical SAM core domain. Residues Cys-98, Cys-102, and Cys-105 each contribute to the [4Fe-4S] cluster site. The [2Fe-2S] cluster site is built by Cys-141, Cys-174, Cys-233, and Arg-303.

Belongs to the radical SAM superfamily. Biotin synthase family. As to quaternary structure, homodimer. It depends on [4Fe-4S] cluster as a cofactor. Requires [2Fe-2S] cluster as cofactor.

The catalysed reaction is (4R,5S)-dethiobiotin + (sulfur carrier)-SH + 2 reduced [2Fe-2S]-[ferredoxin] + 2 S-adenosyl-L-methionine = (sulfur carrier)-H + biotin + 2 5'-deoxyadenosine + 2 L-methionine + 2 oxidized [2Fe-2S]-[ferredoxin]. The protein operates within cofactor biosynthesis; biotin biosynthesis; biotin from 7,8-diaminononanoate: step 2/2. Catalyzes the conversion of dethiobiotin (DTB) to biotin by the insertion of a sulfur atom into dethiobiotin via a radical-based mechanism. The sequence is that of Biotin synthase from Parafrankia sp. (strain EAN1pec).